We begin with the raw amino-acid sequence, 253 residues long: Testis-expressed protein 47 (253 aa).

This chain is Testis-expressed protein 47, found in Rattus norvegicus (Rat).